We begin with the raw amino-acid sequence, 246 residues long: Phosducin (246 aa).

Over residues 1-14 (MEEAKSQSLEEDFE) the composition is skewed to acidic residues. A disordered region spans residues 1–70 (MEEAKSQSLE…GKDSKERVSR (70 aa)). Residues 1–244 (MEEAKSQSLE…LEHTKIEEED (244 aa)) enclose the Phosducin domain. Residues 60–69 (NGKDSKERVS) are compositionally biased toward basic and acidic residues. Ser73 carries the phosphoserine; by PKA modification. A thioredoxin fold region spans residues 111–246 (YGFVYELETG…HTKIEEEDVE (136 aa)).

Belongs to the phosducin family. Forms a complex with the beta and gamma subunits of the GTP-binding protein, transducin. Interacts with CRX. Light-induced changes in cyclic nucleotide levels modulate the phosphorylation of this protein by cAMP kinase.

The protein resides in the cytoplasm. It localises to the cytosol. It is found in the nucleus. Its subcellular location is the cell projection. The protein localises to the cilium. The protein resides in the photoreceptor outer segment. It localises to the photoreceptor inner segment. Its function is as follows. May participate in the regulation of visual phototransduction or in the integration of photoreceptor metabolism. Inhibits the transcriptional activation activity of the cone-rod homeobox CRX. In Homo sapiens (Human), this protein is Phosducin (PDC).